The following is a 327-amino-acid chain: Probable cell division protein WhiA (327 aa).

Positions 275–308 (SLEELGRLADPPMTKDAVAGRIRRLLSMADRKAK) form a DNA-binding region, H-T-H motif. Residues 304–327 (DRKAKQDGIPDTESAVTPDLLEDA) are disordered.

This sequence belongs to the WhiA family.

In terms of biological role, involved in cell division and chromosome segregation. The protein is Probable cell division protein WhiA of Mycobacterium sp. (strain MCS).